Here is a 375-residue protein sequence, read N- to C-terminus: Tyrosine--tRNA ligase (375 aa).

L-tyrosine-binding residues include Y37, Y168, Q172, D175, and Q190. The 'KMSKS' region signature appears at 251–255; the sequence is KMSKS. Position 254 (K254) interacts with ATP.

It belongs to the class-I aminoacyl-tRNA synthetase family. TyrS type 4 subfamily. In terms of assembly, homodimer.

The protein resides in the cytoplasm. It carries out the reaction tRNA(Tyr) + L-tyrosine + ATP = L-tyrosyl-tRNA(Tyr) + AMP + diphosphate + H(+). Catalyzes the attachment of tyrosine to tRNA(Tyr) in a two-step reaction: tyrosine is first activated by ATP to form Tyr-AMP and then transferred to the acceptor end of tRNA(Tyr). The chain is Tyrosine--tRNA ligase from Pyrococcus furiosus (strain ATCC 43587 / DSM 3638 / JCM 8422 / Vc1).